The following is a 422-amino-acid chain: 2-oxoglutarate and iron-dependent oxygenase JMJD4 (422 aa).

Positions glutamine 139 to leucine 298 constitute a JmjC domain. 3 residues coordinate Fe cation: histidine 186, aspartate 188, and histidine 266.

The protein belongs to the JMJD6 family. Requires Fe(2+) as cofactor.

The protein localises to the cytoplasm. The enzyme catalyses L-lysyl-[protein] + 2-oxoglutarate + O2 = 4-hydroxy-L-lysyl-[protein] + succinate + CO2. Its function is as follows. Catalyzes the 2-oxoglutarate and iron-dependent C4-lysyl hydroxylation of ETF1 at 'Lys-63' thereby promoting the translational termination efficiency of ETF1. In Danio rerio (Zebrafish), this protein is 2-oxoglutarate and iron-dependent oxygenase JMJD4 (jmjd4).